We begin with the raw amino-acid sequence, 206 residues long: Na(+)-translocating NADH-quinone reductase subunit E (206 aa).

6 consecutive transmembrane segments (helical) span residues A12–V32, I36–V56, F85–F105, G118–V138, V148–I168, and L184–I204.

This sequence belongs to the NqrDE/RnfAE family. In terms of assembly, composed of six subunits; NqrA, NqrB, NqrC, NqrD, NqrE and NqrF.

It is found in the cell inner membrane. The enzyme catalyses a ubiquinone + n Na(+)(in) + NADH + H(+) = a ubiquinol + n Na(+)(out) + NAD(+). Functionally, NQR complex catalyzes the reduction of ubiquinone-1 to ubiquinol by two successive reactions, coupled with the transport of Na(+) ions from the cytoplasm to the periplasm. NqrA to NqrE are probably involved in the second step, the conversion of ubisemiquinone to ubiquinol. In Chromohalobacter salexigens (strain ATCC BAA-138 / DSM 3043 / CIP 106854 / NCIMB 13768 / 1H11), this protein is Na(+)-translocating NADH-quinone reductase subunit E.